Reading from the N-terminus, the 1041-residue chain is RAS protein activator like-3 (1041 aa).

Residues 1–59 (MKPECGQTMFRTFWSRSRDSSAMDPPLQSEEDSQTQPSLPSPLTSYRWHTGGSGEKAAG) are disordered. Polar residues predominate over residues 34-44 (QTQPSLPSPLT). Serine 41, serine 74, serine 187, serine 189, serine 190, serine 193, serine 239, serine 252, serine 256, and serine 259 each carry phosphoserine. A coiled-coil region spans residues 218-243 (SNQVHNVRKLLKRLKEKKRAKSELGA). In terms of domain architecture, PH spans 220–321 (QVHNVRKLLK…WIEDLRRQFQ (102 aa)). A disordered region spans residues 234 to 256 (KKRAKSELGAYTPRDGPPSALGS). Threonine 262 is subject to Phosphothreonine. The region spanning 312–430 (WIEDLRRQFQ…APAAGLERWF (119 aa)) is the C2 domain. Residues 500–708 (GRAQALVTDL…PAMQHFLDQV (209 aa)) enclose the Ras-GAP domain. The interval 790 to 910 (GEKPGFLAPR…PGDRYQTTGT (121 aa)) is disordered. Serine 813 and serine 816 each carry phosphoserine. The span at 850-866 (RPTHRRPSAGSKPRPKG) shows a compositional bias: basic residues. The stretch at 931–1013 (QKALSLLVES…LRDSLQSLQL (83 aa)) forms a coiled coil. Residues 1016-1041 (KTPGSRSQPLPLKAPCVNGADLSMGT) form a disordered region.

Predominantly expressed in hematopoietic tissues.

The protein localises to the cytoplasm. It is found in the cell cortex. Its function is as follows. Functions as a Ras GTPase-activating protein. Plays an important role in the expansion and functions of natural killer T (NKT) cells in the liver by negatively regulating RAS activity and the down-stream ERK signaling pathway. The sequence is that of RAS protein activator like-3 (Rasal3) from Mus musculus (Mouse).